Consider the following 449-residue polypeptide: Heterogeneous nuclear ribonucleoprotein H2 (449 aa).

Methionine 1 is subject to N-acetylmethionine. Methionine 2 carries the N-acetylmethionine; in Heterogeneous nuclear ribonucleoprotein H2, N-terminally processed modification. Residues 11–90 (FVVKVRGLPW…RYVEVFKSNS (80 aa)) enclose the RRM 1 domain. Serine 23 is subject to Phosphoserine. Lysine 35 participates in a covalent cross-link: Glycyl lysine isopeptide (Lys-Gly) (interchain with G-Cter in SUMO2). A phosphoserine mark is found at serine 54 and serine 63. Lysine 87 is covalently cross-linked (Glycyl lysine isopeptide (Lys-Gly) (interchain with G-Cter in SUMO2)). Position 90 is a phosphoserine (serine 90). Lysine 98 participates in a covalent cross-link: Glycyl lysine isopeptide (Lys-Gly) (interchain with G-Cter in SUMO2). The region spanning 111 to 188 (GFVRLRGLPF…RYIEIFKSSR (78 aa)) is the RRM 2 domain. Dimethylated arginine; alternate is present on arginine 233. Arginine 233 bears the Omega-N-methylarginine; alternate mark. Residues 234 to 249 (GAYGGGYGGYDDYGGY) form a 1-1 repeat. Residues 234-433 (GAYGGGYGGY…YGGQSSMSGY (200 aa)) form a 2 X 16 AA Gly-rich approximate repeats region. The residue at position 246 (tyrosine 246) is a Phosphotyrosine. Residues 289–364 (HCVHMRGLPY…RYVELFLNST (76 aa)) enclose the RRM 3 domain. Serine 310 carries the post-translational modification Phosphoserine. 3 tandem repeats follow at residues 354-372 (HRYV…GGAY), 374-392 (HSYV…GGAY), and 418-433 (GGYG…MSGY). The interval 354–392 (HRYVELFLNSTAGTSGGAYDHSYVELFLNSTAGASGGAY) is 2 X 19 AA perfect repeats.

In terms of assembly, component of a ribonucleoprotein complex containing mRNAs and RNA-binding proteins including DDX5, HNRNPH2 and SRSF1 as well as splicing regulator ARVCF. Interacts with TXNL4/DIM1.

It is found in the nucleus. The protein localises to the nucleoplasm. Its function is as follows. This protein is a component of the heterogeneous nuclear ribonucleoprotein (hnRNP) complexes which provide the substrate for the processing events that pre-mRNAs undergo before becoming functional, translatable mRNAs in the cytoplasm. Binds poly(RG). The protein is Heterogeneous nuclear ribonucleoprotein H2 (HNRNPH2) of Bos taurus (Bovine).